A 133-amino-acid polypeptide reads, in one-letter code: Small ribosomal subunit protein uS8 (133 aa).

This sequence belongs to the universal ribosomal protein uS8 family. Part of the 30S ribosomal subunit. Contacts proteins S5 and S12.

Functionally, one of the primary rRNA binding proteins, it binds directly to 16S rRNA central domain where it helps coordinate assembly of the platform of the 30S subunit. This is Small ribosomal subunit protein uS8 from Koribacter versatilis (strain Ellin345).